The following is a 221-amino-acid chain: Small ribosomal subunit protein uS5 (221 aa).

The region spanning 46–109 is the S5 DRBM domain; it reads LKDEVINIER…DNAKLNIIEI (64 aa).

The protein belongs to the universal ribosomal protein uS5 family. Part of the 30S ribosomal subunit. Contacts protein S4.

In terms of biological role, with S4 and S12 plays an important role in translational accuracy. This is Small ribosomal subunit protein uS5 from Picrophilus torridus (strain ATCC 700027 / DSM 9790 / JCM 10055 / NBRC 100828 / KAW 2/3).